Reading from the N-terminus, the 325-residue chain is Cytochrome f (325 aa).

The first 40 residues, 1 to 40 (MSKINLSTMWSSFIKKIAKTILVAIACISLFLTSSPAANA), serve as a signal peptide directing secretion. Heme contacts are provided by Tyr-41, Cys-62, Cys-65, and His-66. Residues 291-311 (VKWLMAFFALVMLAQIMLVLK) traverse the membrane as a helical segment.

It belongs to the cytochrome f family. The 4 large subunits of the cytochrome b6-f complex are cytochrome b6, subunit IV (17 kDa polypeptide, PetD), cytochrome f and the Rieske protein, while the 4 small subunits are PetG, PetL, PetM and PetN. The complex functions as a dimer. The cofactor is heme.

The protein localises to the cellular thylakoid membrane. Component of the cytochrome b6-f complex, which mediates electron transfer between photosystem II (PSII) and photosystem I (PSI), cyclic electron flow around PSI, and state transitions. The chain is Cytochrome f from Trichodesmium erythraeum (strain IMS101).